The sequence spans 565 residues: Genetic interactor of prohibitins 3, mitochondrial (565 aa).

A CP-type G domain is found at 129 to 315 (TDVLEKIPRG…IYDLPGFTTN (187 aa)).

The protein belongs to the TRAFAC class YlqF/YawG GTPase family. GEP3 subfamily.

It localises to the mitochondrion. Functionally, may be involved in the mitochondrial lipid metabolism. The protein is Genetic interactor of prohibitins 3, mitochondrial (GEP3) of Zygosaccharomyces rouxii (strain ATCC 2623 / CBS 732 / NBRC 1130 / NCYC 568 / NRRL Y-229).